We begin with the raw amino-acid sequence, 335 residues long: Endo-1,4-beta-xylanase S20 (335 aa).

An N-terminal signal peptide occupies residues 1-22 (MLRKLVTGALAAALLLSGQSNA). The 203-residue stretch at 39–241 (NNKNETGNGN…GSGYVDFTYA (203 aa)) folds into the GH11 domain. N-linked (GlcNAc...) asparagine glycosylation is found at N42 and N78. E134 (nucleophile) is an active-site residue. An N-linked (GlcNAc...) asparagine glycan is attached at N202. Residue E228 is the Proton donor of the active site. The N-linked (GlcNAc...) asparagine glycan is linked to N251. The disordered stretch occupies residues 251–291 (NASAPSNNNNNNNNNNDNNGNWNNWNNNNNNNNNNNNNNNN). Over residues 257–291 (NNNNNNNNNNDNNGNWNNWNNNNNNNNNNNNNNNN) the composition is skewed to low complexity. A CBM1 domain is found at 300-335 (NCAAIWGQCGGSGYNGPKCCKQGSCKQINQWYSQCQ).

This sequence belongs to the glycosyl hydrolase 11 (cellulase G) family.

The protein localises to the secreted. The enzyme catalyses Endohydrolysis of (1-&gt;4)-beta-D-xylosidic linkages in xylans.. The protein operates within glycan degradation; xylan degradation. Functionally, endo-1,4-beta-xylanase involved in the hydrolysis of xylan, a major structural heterogeneous polysaccharide found in plant biomass representing the second most abundant polysaccharide in the biosphere, after cellulose. This Neocallimastix patriciarum (Rumen fungus) protein is Endo-1,4-beta-xylanase S20 (xynS20).